We begin with the raw amino-acid sequence, 134 residues long: Putative nickel-responsive regulator (134 aa).

H78, H89, H91, and C97 together coordinate Ni(2+).

Belongs to the transcriptional regulatory CopG/NikR family. Ni(2+) is required as a cofactor.

Its function is as follows. Transcriptional regulator. In Chlorobaculum parvum (strain DSM 263 / NCIMB 8327) (Chlorobium vibrioforme subsp. thiosulfatophilum), this protein is Putative nickel-responsive regulator.